The following is a 362-amino-acid chain: MADEQFPAAATALEEYQSIEEQMASPEVVSNPDKLRKLGRRHAELGAIVGAYKAWLQVKDDLAAAQEMAGEDADFAEEAKRLEDELPGVEEKLRTALIPRDPDDARDTIMEIKAGTGGEEAALFAGDLLRMYTRYAEKRGWSVNVQSENTTELGGVKDVQIAIRAKGTPAPEDGVWASMKYEGGVHRVQRIPVTESQGRIQTSAAGVIVFPEADEDDDEIEIDPKDLKIDIFMSSGPGGQSVNTTYSAVRMTHLPTGITVNMQDEKSQIQNRAAALRVLKSRLLAMKHEQEAAEAADMRHSQVRSLDRSERIRTYNFPENRIVDHRTNYKAYNLDAVLDGDLQAVIDSDIQADEADRLANQK.

At Gln240 the chain carries N5-methylglutamine.

This sequence belongs to the prokaryotic/mitochondrial release factor family. Post-translationally, methylated by PrmC. Methylation increases the termination efficiency of RF1.

The protein localises to the cytoplasm. Its function is as follows. Peptide chain release factor 1 directs the termination of translation in response to the peptide chain termination codons UAG and UAA. The chain is Peptide chain release factor 1 from Bifidobacterium longum (strain NCC 2705).